The following is a 203-amino-acid chain: Cold-regulated 413 plasma membrane protein 2 (203 aa).

Topologically, residues 1–43 (MGRMDYLAMKTDDVDTVALVNSDMEELKVAAKKLFSDVSKLGG) are extracellular. The helical transmembrane segment at 44 to 64 (LGFGVSFLKFLASFAAIYLLI) threads the bilayer. The Cytoplasmic segment spans residues 65 to 74 (LDRTNWKTKM). Residues 75–95 (LTSLLIPYIFLSLPSVIFNFL) form a helical membrane-spanning segment. At 96–98 (SGD) the chain is on the extracellular side. The helical transmembrane segment at 99–119 (VGKWIAFVAVVLRLFFPKHFP) threads the bilayer. Aspartate 120 is a topological domain (cytoplasmic). The helical transmembrane segment at 121–141 (WLEMPGSLILLLVVSPHFLAH) threads the bilayer. Topologically, residues 142–144 (HIR) are extracellular. The chain crosses the membrane as a helical span at residues 145–165 (GTWIGTVISLFIGCYLLQEHI). Topologically, residues 166–179 (RASGGFRNSFTQPR) are cytoplasmic. The chain crosses the membrane as a helical span at residues 180 to 200 (GVSNTLGIILLLVYPVWALIV). At 201–203 (RVM) the chain is on the extracellular side.

The protein belongs to the Cold-regulated 413 protein family.

It localises to the cell membrane. This is Cold-regulated 413 plasma membrane protein 2 (COR413PM2) from Arabidopsis thaliana (Mouse-ear cress).